We begin with the raw amino-acid sequence, 158 residues long: NADH-quinone oxidoreductase subunit B (158 aa).

[4Fe-4S] cluster is bound by residues C37, C38, C102, and C132.

The protein belongs to the complex I 20 kDa subunit family. As to quaternary structure, NDH-1 is composed of 14 different subunits. Subunits NuoB, C, D, E, F, and G constitute the peripheral sector of the complex. Requires [4Fe-4S] cluster as cofactor.

Its subcellular location is the cell inner membrane. It carries out the reaction a quinone + NADH + 5 H(+)(in) = a quinol + NAD(+) + 4 H(+)(out). NDH-1 shuttles electrons from NADH, via FMN and iron-sulfur (Fe-S) centers, to quinones in the respiratory chain. Couples the redox reaction to proton translocation (for every two electrons transferred, four hydrogen ions are translocated across the cytoplasmic membrane), and thus conserves the redox energy in a proton gradient. In Bordetella parapertussis (strain 12822 / ATCC BAA-587 / NCTC 13253), this protein is NADH-quinone oxidoreductase subunit B.